A 364-amino-acid chain; its full sequence is MEKLRVGIVFGGKSAEHEVSLQSAKNIVDAIDKSRFDVVLLGIDKQGQWHVSDASNYLLNADDPAHIALRPSATSLAQVPGKHEHQLIDAQNGQPLPTVDVIFPIVHGTLGEDGSLQGMLRVANLPFVGSDVLASAACMDKDVTKRLLRDAGLNIAPFITLTRANRHNISFAEVESKLGLPLFVKPANQGSSVGVSKVTSEEQYTIAVDLAFEFDHKVIVEQGIKGREIECAVLGNDNPQASTCGEIVLTSDFYAYDTKYIDEDGAKVVVPAAIAPEINDKIRAIAVQAYQTLGCAGMARVDVFLTPENEVVINEINTLPGFTNISMYPKLWQASGLGYTDLITRLIELALERHAADNALKTTM.

Positions 145 to 348 (KRLLRDAGLN…YTDLITRLIE (204 aa)) constitute an ATP-grasp domain. 175–230 (ESKLGLPLFVKPANQGSSVGVSKVTSEEQYTIAVDLAFEFDHKVIVEQGIKGREIE) contacts ATP. Mg(2+) is bound by residues D302, E315, and N317.

Belongs to the D-alanine--D-alanine ligase family. Mg(2+) is required as a cofactor. The cofactor is Mn(2+).

It localises to the cytoplasm. The catalysed reaction is 2 D-alanine + ATP = D-alanyl-D-alanine + ADP + phosphate + H(+). It participates in cell wall biogenesis; peptidoglycan biosynthesis. Its function is as follows. Cell wall formation. In Escherichia coli O6:H1 (strain CFT073 / ATCC 700928 / UPEC), this protein is D-alanine--D-alanine ligase A.